A 67-amino-acid chain; its full sequence is Theromin (67 aa).

Residues 2–27 (CENTECPRACPGEYEFDEDGCNTCVC) enclose the Antistasin-like domain.

In terms of assembly, homodimer. Post-translationally, eight disulfide bonds are present.

It is found in the secreted. In terms of biological role, potent thrombin-specific inhibitor. This chain is Theromin, found in Theromyzon tessulatum (Duck leech).